The following is a 145-amino-acid chain: MIALIQRVTQARVTIDNEVAGAIGPGLLILLGVERQDDEQKAAKLCERVLAYRIFSDEQGKMNLNVRQSGGRVLVVSQFTLAVDTDRGLRPGFSRGAAPADARRLYDDFTDRCRQTGIRTETGRFGADMQVALVNDGPVTFWLQV.

The short motif at 137–138 (GP) is the Gly-cisPro motif, important for rejection of L-amino acids element.

The protein belongs to the DTD family. As to quaternary structure, homodimer.

Its subcellular location is the cytoplasm. It catalyses the reaction glycyl-tRNA(Ala) + H2O = tRNA(Ala) + glycine + H(+). The catalysed reaction is a D-aminoacyl-tRNA + H2O = a tRNA + a D-alpha-amino acid + H(+). An aminoacyl-tRNA editing enzyme that deacylates mischarged D-aminoacyl-tRNAs. Also deacylates mischarged glycyl-tRNA(Ala), protecting cells against glycine mischarging by AlaRS. Acts via tRNA-based rather than protein-based catalysis; rejects L-amino acids rather than detecting D-amino acids in the active site. By recycling D-aminoacyl-tRNA to D-amino acids and free tRNA molecules, this enzyme counteracts the toxicity associated with the formation of D-aminoacyl-tRNA entities in vivo and helps enforce protein L-homochirality. This is D-aminoacyl-tRNA deacylase from Sodalis glossinidius (strain morsitans).